A 753-amino-acid chain; its full sequence is 5-methyltetrahydropteroyltriglutamate--homocysteine methyltransferase (753 aa).

5-methyltetrahydropteroyltri-L-glutamate is bound by residues 17-20 (RELK) and lysine 117. L-homocysteine-binding positions include 431-433 (IGS) and glutamate 484. Residues 431–433 (IGS) and glutamate 484 contribute to the L-methionine site. 5-methyltetrahydropteroyltri-L-glutamate contacts are provided by residues 515-516 (RC) and tryptophan 561. Aspartate 599 provides a ligand contact to L-homocysteine. Aspartate 599 is a binding site for L-methionine. Position 605 (glutamate 605) interacts with 5-methyltetrahydropteroyltri-L-glutamate. Zn(2+) contacts are provided by histidine 641, cysteine 643, and glutamate 665. Catalysis depends on histidine 694, which acts as the Proton donor. Cysteine 726 is a Zn(2+) binding site.

It belongs to the vitamin-B12 independent methionine synthase family. Zn(2+) serves as cofactor.

The catalysed reaction is 5-methyltetrahydropteroyltri-L-glutamate + L-homocysteine = tetrahydropteroyltri-L-glutamate + L-methionine. It functions in the pathway amino-acid biosynthesis; L-methionine biosynthesis via de novo pathway; L-methionine from L-homocysteine (MetE route): step 1/1. Its function is as follows. Catalyzes the transfer of a methyl group from 5-methyltetrahydrofolate to homocysteine resulting in methionine formation. The chain is 5-methyltetrahydropteroyltriglutamate--homocysteine methyltransferase from Escherichia coli O1:K1 / APEC.